Consider the following 486-residue polypeptide: Corytuberine synthase (486 aa).

A helical membrane pass occupies residues A6–L21. C428 is a binding site for heme.

Belongs to the cytochrome P450 family. The cofactor is heme.

It localises to the endoplasmic reticulum membrane. It catalyses the reaction (S)-reticuline + reduced [NADPH--hemoprotein reductase] + O2 = (S)-corytuberine + oxidized [NADPH--hemoprotein reductase] + 2 H2O + 2 H(+). With respect to regulation, inhibited by ketoconazole. Cytochrome P450 that catalyzes an intramolecular C-C phenol coupling of (S)-reticuline in magnoflorine biosynthesis. Catalyzes the formation of (S)-corytuberine from (S)-reticuline, and also, with a lover efficiency, the 4'-O-demethylation of codamine to produce orientaline, and subsequent C-C-phenol coupling of orientaline. Can also use (R,S)-norreticuline, (R,S)-orientaline, (S)-N-methylcoclaurine and (S)-coclaurine as substrates, but not (R,S)-6-O-methyllaudanosoline, (R,S)-6-O-methylnorlaudanosoline, (R,S)-laudanine, (R,S)-norlaudanine, (R,S)-4'-O-methyllaudanosoline, (R,S)-pseudocodamine, (R,S)-norpseudocodamine, (R,S)-laudanosine, (R,S)-norlaudanosine, (R,S)-laudanosoline or (R,S)-norlaudanosoline. The sequence is that of Corytuberine synthase from Coptis japonica (Japanese goldthread).